The chain runs to 147 residues: Large ribosomal subunit protein bL9 (147 aa).

The protein belongs to the bacterial ribosomal protein bL9 family.

Binds to the 23S rRNA. In Halothermothrix orenii (strain H 168 / OCM 544 / DSM 9562), this protein is Large ribosomal subunit protein bL9.